We begin with the raw amino-acid sequence, 177 residues long: Large ribosomal subunit protein uL6 (177 aa).

This sequence belongs to the universal ribosomal protein uL6 family. As to quaternary structure, part of the 50S ribosomal subunit.

This protein binds to the 23S rRNA, and is important in its secondary structure. It is located near the subunit interface in the base of the L7/L12 stalk, and near the tRNA binding site of the peptidyltransferase center. The chain is Large ribosomal subunit protein uL6 from Methylorubrum extorquens (strain CM4 / NCIMB 13688) (Methylobacterium extorquens).